A 199-amino-acid polypeptide reads, in one-letter code: Small ribosomal subunit protein uS4 (199 aa).

The S4 RNA-binding domain maps to 94 to 157 (SRLDNIVYRM…QNVPTILASI (64 aa)).

This sequence belongs to the universal ribosomal protein uS4 family. In terms of assembly, part of the 30S ribosomal subunit. Contacts protein S5. The interaction surface between S4 and S5 is involved in control of translational fidelity.

Its function is as follows. One of the primary rRNA binding proteins, it binds directly to 16S rRNA where it nucleates assembly of the body of the 30S subunit. In terms of biological role, with S5 and S12 plays an important role in translational accuracy. This Mycoplasma mobile (strain ATCC 43663 / 163K / NCTC 11711) (Mesomycoplasma mobile) protein is Small ribosomal subunit protein uS4.